The chain runs to 295 residues: Transcription factor bHLH19 (295 aa).

Residues 115-164 (VLAKEHVLAERKRREKLSEKFIALSALLPGLKKADKVTILDDAISRMKQL) form the bHLH domain.

As to quaternary structure, homodimer. As to expression, expressed in roots and leaves.

It localises to the nucleus. This chain is Transcription factor bHLH19 (BHLH19), found in Arabidopsis thaliana (Mouse-ear cress).